The primary structure comprises 316 residues: Phosphatidylglycerol--prolipoprotein diacylglyceryl transferase (316 aa).

A run of 3 helical transmembrane segments spans residues 18-38, 47-67, and 95-115; these read PIPIRAYAMCIIAGIIVAIWL, GGNPEIVLDAAIVAVPAGIIG, and NGGLGIWGAVILGGLAVAVFF. Arg141 lines the a 1,2-diacyl-sn-glycero-3-phospho-(1'-sn-glycerol) pocket. 2 helical membrane-spanning segments follow: residues 188–208 and 251–271; these read VHPTFLYELLWNLLIFALLMW and INTIVSAVVFAGAIIVFFLLK. Positions 292-316 are disordered; the sequence is AVASPDGKPLPKAGEGIDGETPSTR.

It belongs to the Lgt family.

It localises to the cell membrane. The enzyme catalyses L-cysteinyl-[prolipoprotein] + a 1,2-diacyl-sn-glycero-3-phospho-(1'-sn-glycerol) = an S-1,2-diacyl-sn-glyceryl-L-cysteinyl-[prolipoprotein] + sn-glycerol 1-phosphate + H(+). The protein operates within protein modification; lipoprotein biosynthesis (diacylglyceryl transfer). Its function is as follows. Catalyzes the transfer of the diacylglyceryl group from phosphatidylglycerol to the sulfhydryl group of the N-terminal cysteine of a prolipoprotein, the first step in the formation of mature lipoproteins. In Corynebacterium glutamicum (strain ATCC 13032 / DSM 20300 / JCM 1318 / BCRC 11384 / CCUG 27702 / LMG 3730 / NBRC 12168 / NCIMB 10025 / NRRL B-2784 / 534), this protein is Phosphatidylglycerol--prolipoprotein diacylglyceryl transferase.